Reading from the N-terminus, the 130-residue chain is Large ribosomal subunit protein eL34 (130 aa).

Residues 111–130 (KPVSKPPKIQKTAKAASKSK) form a disordered region.

Belongs to the eukaryotic ribosomal protein eL34 family.

The sequence is that of Large ribosomal subunit protein eL34 (RpL34) from Aedes albopictus (Asian tiger mosquito).